A 309-amino-acid polypeptide reads, in one-letter code: Small ribosomal subunit biogenesis GTPase RsgA (309 aa).

The CP-type G domain maps to 88–247 (KNLITRPPVA…IADTPGFNKP (160 aa)). Residues 137–140 (TKRD) and 189–197 (GPSGVGKSS) contribute to the GTP site. Cys272, Cys277, His279, and Cys285 together coordinate Zn(2+).

Belongs to the TRAFAC class YlqF/YawG GTPase family. RsgA subfamily. As to quaternary structure, monomer. Associates with 30S ribosomal subunit, binds 16S rRNA. The cofactor is Zn(2+).

The protein resides in the cytoplasm. In terms of biological role, one of several proteins that assist in the late maturation steps of the functional core of the 30S ribosomal subunit. Helps release RbfA from mature subunits. May play a role in the assembly of ribosomal proteins into the subunit. Circularly permuted GTPase that catalyzes slow GTP hydrolysis, GTPase activity is stimulated by the 30S ribosomal subunit. This chain is Small ribosomal subunit biogenesis GTPase RsgA, found in Prochlorococcus marinus (strain SARG / CCMP1375 / SS120).